The primary structure comprises 128 residues: UPF0102 protein Mext_0406 (128 aa).

This sequence belongs to the UPF0102 family.

The polypeptide is UPF0102 protein Mext_0406 (Methylorubrum extorquens (strain PA1) (Methylobacterium extorquens)).